Reading from the N-terminus, the 1469-residue chain is uncharacterized protein (1469 aa).

The segment covering 146 to 180 (GDHITPKEEEEKEKEKEKEKEKEKEKEKEKEKDSE) has biased composition (basic and acidic residues). 9 disordered regions span residues 146–186 (GDHI…LQEQ), 231–255 (IQNN…DNNN), 306–344 (TTTT…GGDS), 430–455 (LNFN…PYHY), 520–560 (PVKN…NNNS), 654–706 (TTTT…PLVR), 719–755 (RTQT…VKNQ), 881–958 (YNNI…NIIN), and 1329–1369 (NCSS…NSSN). Composition is skewed to low complexity over residues 232 to 241 (QNNQNNQNNN), 306 to 327 (TTTT…ISNT), 430 to 449 (LNFN…NNNN), 523 to 559 (NNNN…INNN), and 654 to 693 (TTTT…TTTP). A compositionally biased stretch (polar residues) spans 719–731 (RTQTQLQTKIQPK). The segment covering 732–749 (SPQPQPTAAPEPQKPPTP) has biased composition (pro residues). Low complexity-rich tracts occupy residues 1329-1347 (NCSS…SGSE) and 1354-1369 (RSNT…NSSN).

This is an uncharacterized protein from Dictyostelium discoideum (Social amoeba).